The primary structure comprises 136 residues: ATP synthase epsilon chain (136 aa).

It belongs to the ATPase epsilon chain family. As to quaternary structure, F-type ATPases have 2 components, CF(1) - the catalytic core - and CF(0) - the membrane proton channel. CF(1) has five subunits: alpha(3), beta(3), gamma(1), delta(1), epsilon(1). CF(0) has three main subunits: a, b and c.

The protein localises to the cellular thylakoid membrane. Produces ATP from ADP in the presence of a proton gradient across the membrane. This Prochloron didemni protein is ATP synthase epsilon chain (atpC).